The chain runs to 208 residues: Small ribosomal subunit protein uS4 (208 aa).

In terms of domain architecture, S4 RNA-binding spans 98–158; it reads RRLDNVVYRL…EKSRKIACIN (61 aa).

Belongs to the universal ribosomal protein uS4 family. In terms of assembly, part of the 30S ribosomal subunit. Contacts protein S5. The interaction surface between S4 and S5 is involved in control of translational fidelity.

Its function is as follows. One of the primary rRNA binding proteins, it binds directly to 16S rRNA where it nucleates assembly of the body of the 30S subunit. In terms of biological role, with S5 and S12 plays an important role in translational accuracy. The chain is Small ribosomal subunit protein uS4 from Geobacter metallireducens (strain ATCC 53774 / DSM 7210 / GS-15).